A 184-amino-acid chain; its full sequence is MSWRSEDIWIELLTGSRKLSNFCWALILFLGSLGFLLVGTSSYLGRNWISFVPSQQFIFFPQGIVMSFYGIAGLFISSYLWCTISWNIGSGYDRFDRKEGIVCIFRWGFPGKNRRIFLRFLIKDIQSVRIEVKEGLYARHVLYMDIRGQGAIPLTRTDENLTPREIEQKAAELAYFLRVPIEVF.

The next 2 helical transmembrane spans lie at Leu19–Gly39 and Phe57–Ser77.

Belongs to the Ycf4 family.

It localises to the plastid. The protein localises to the chloroplast thylakoid membrane. In terms of biological role, seems to be required for the assembly of the photosystem I complex. The sequence is that of Photosystem I assembly protein Ycf4 from Jasminum nudiflorum (Winter jasmine).